Here is a 236-residue protein sequence, read N- to C-terminus: 2,3,4,5-tetrahydropyridine-2,6-dicarboxylate N-acetyltransferase (236 aa).

The protein belongs to the transferase hexapeptide repeat family. DapH subfamily.

The enzyme catalyses (S)-2,3,4,5-tetrahydrodipicolinate + acetyl-CoA + H2O = L-2-acetamido-6-oxoheptanedioate + CoA. Its pathway is amino-acid biosynthesis; L-lysine biosynthesis via DAP pathway; LL-2,6-diaminopimelate from (S)-tetrahydrodipicolinate (acetylase route): step 1/3. Its function is as follows. Catalyzes the transfer of an acetyl group from acetyl-CoA to tetrahydrodipicolinate. This Clostridium botulinum (strain Okra / Type B1) protein is 2,3,4,5-tetrahydropyridine-2,6-dicarboxylate N-acetyltransferase.